Reading from the N-terminus, the 513-residue chain is Maturase K (513 aa).

Belongs to the intron maturase 2 family. MatK subfamily.

It is found in the plastid. Its subcellular location is the chloroplast. Usually encoded in the trnK tRNA gene intron. Probably assists in splicing its own and other chloroplast group II introns. This chain is Maturase K, found in Typha angustifolia (Narrow leaf cattail).